A 135-amino-acid polypeptide reads, in one-letter code: Holo-[acyl-carrier-protein] synthase (135 aa).

2 residues coordinate Mg(2+): D8 and E58.

Belongs to the P-Pant transferase superfamily. AcpS family. Mg(2+) is required as a cofactor.

Its subcellular location is the cytoplasm. The enzyme catalyses apo-[ACP] + CoA = holo-[ACP] + adenosine 3',5'-bisphosphate + H(+). Transfers the 4'-phosphopantetheine moiety from coenzyme A to a Ser of acyl-carrier-protein. The sequence is that of Holo-[acyl-carrier-protein] synthase from Ligilactobacillus salivarius (strain UCC118) (Lactobacillus salivarius).